The chain runs to 323 residues: SURF1-like protein (323 aa).

Residues 57–71 (DAPKSRENREKDGGK) are compositionally biased toward basic and acidic residues. Positions 57–76 (DAPKSRENREKDGGKSKKSK) are disordered. 2 helical membrane-spanning segments follow: residues 81 to 101 (WSTG…LGIW) and 299 to 319 (HLNY…MWIH).

It belongs to the SURF1 family.

It is found in the mitochondrion inner membrane. Probably involved in the biogenesis of the COX complex. This Caenorhabditis elegans protein is SURF1-like protein (sft-1).